We begin with the raw amino-acid sequence, 495 residues long: Glutamate--tRNA ligase (495 aa).

Positions 12–22 (PSPTGHLHIGN) match the 'HIGH' region motif. The 'KMSKS' region signature appears at 259–263 (KLSKR). Residue K262 coordinates ATP.

The protein belongs to the class-I aminoacyl-tRNA synthetase family. Glutamate--tRNA ligase type 1 subfamily. In terms of assembly, monomer.

Its subcellular location is the cytoplasm. The catalysed reaction is tRNA(Glu) + L-glutamate + ATP = L-glutamyl-tRNA(Glu) + AMP + diphosphate. Catalyzes the attachment of glutamate to tRNA(Glu) in a two-step reaction: glutamate is first activated by ATP to form Glu-AMP and then transferred to the acceptor end of tRNA(Glu). This Latilactobacillus sakei subsp. sakei (strain 23K) (Lactobacillus sakei subsp. sakei) protein is Glutamate--tRNA ligase.